Reading from the N-terminus, the 372-residue chain is Aminomethyltransferase (372 aa).

It belongs to the GcvT family. In terms of assembly, the glycine cleavage system is composed of four proteins: P, T, L and H.

The catalysed reaction is N(6)-[(R)-S(8)-aminomethyldihydrolipoyl]-L-lysyl-[protein] + (6S)-5,6,7,8-tetrahydrofolate = N(6)-[(R)-dihydrolipoyl]-L-lysyl-[protein] + (6R)-5,10-methylene-5,6,7,8-tetrahydrofolate + NH4(+). Functionally, the glycine cleavage system catalyzes the degradation of glycine. This is Aminomethyltransferase from Rubrobacter xylanophilus (strain DSM 9941 / JCM 11954 / NBRC 16129 / PRD-1).